Consider the following 103-residue polypeptide: Large ribosomal subunit protein bL21 (103 aa).

It belongs to the bacterial ribosomal protein bL21 family. As to quaternary structure, part of the 50S ribosomal subunit. Contacts protein L20.

In terms of biological role, this protein binds to 23S rRNA in the presence of protein L20. The protein is Large ribosomal subunit protein bL21 of Azoarcus sp. (strain BH72).